The primary structure comprises 600 residues: Glutamine--fructose-6-phosphate aminotransferase [isomerizing] (600 aa).

The active-site Nucleophile; for GATase activity is cysteine 2. The Glutamine amidotransferase type-2 domain occupies 2–217 (CGIVGFIGEQ…DKEIVIVTKE (216 aa)). SIS domains lie at 283–422 (IRNA…AKGE) and 452–590 (LAKQ…VDKP). The active-site For Fru-6P isomerization activity is the lysine 595.

In terms of assembly, homodimer.

It is found in the cytoplasm. It catalyses the reaction D-fructose 6-phosphate + L-glutamine = D-glucosamine 6-phosphate + L-glutamate. Functionally, catalyzes the first step in hexosamine metabolism, converting fructose-6P into glucosamine-6P using glutamine as a nitrogen source. The chain is Glutamine--fructose-6-phosphate aminotransferase [isomerizing] from Bacillus cereus (strain ATCC 10987 / NRS 248).